The following is a 338-amino-acid chain: Lipoate-protein ligase A (338 aa).

A BPL/LPL catalytic domain is found at 29-216 (PATQRVLFLW…AFFAHYGERV (188 aa)). ATP-binding positions include Arg-71, 76-79 (GAVF), and Lys-134. Lys-134 is a (R)-lipoate binding site.

The protein belongs to the LplA family. As to quaternary structure, monomer.

It localises to the cytoplasm. The enzyme catalyses L-lysyl-[lipoyl-carrier protein] + (R)-lipoate + ATP = N(6)-[(R)-lipoyl]-L-lysyl-[lipoyl-carrier protein] + AMP + diphosphate + H(+). Its pathway is protein modification; protein lipoylation via exogenous pathway; protein N(6)-(lipoyl)lysine from lipoate: step 1/2. The protein operates within protein modification; protein lipoylation via exogenous pathway; protein N(6)-(lipoyl)lysine from lipoate: step 2/2. In terms of biological role, catalyzes both the ATP-dependent activation of exogenously supplied lipoate to lipoyl-AMP and the transfer of the activated lipoyl onto the lipoyl domains of lipoate-dependent enzymes. This Salmonella paratyphi B (strain ATCC BAA-1250 / SPB7) protein is Lipoate-protein ligase A.